Reading from the N-terminus, the 375-residue chain is Outer membrane porin C (375 aa).

A signal peptide spans 1 to 21; that stretch reads MKVKVLSLLVPALLVAGAANA. The Periplasmic segment spans residues 22–33; the sequence is AEVYNKDGNKLD. Residues 34-42 form a beta stranded membrane-spanning segment; that stretch reads LYGKVDGLH. Topologically, residues 43–53 are extracellular; that stretch reads YFSDDKSVDGD. A beta stranded membrane pass occupies residues 54 to 63; that stretch reads QTYMRLGFKG. The Periplasmic portion of the chain corresponds to 64–73; sequence ETQVTDQLTG. Residues 74–84 traverse the membrane as a beta stranded segment; the sequence is YGQWEYQIQGN. Topologically, residues 85–91 are extracellular; sequence APESENN. Residues 92 to 101 traverse the membrane as a beta stranded segment; sequence SWTRVAFAGL. Residues 102–106 lie on the Periplasmic side of the membrane; the sequence is KFQDI. Residues 107-115 form a beta stranded membrane-spanning segment; the sequence is GSFDYGRNY. At 116 to 141 the chain is on the extracellular side; sequence GVVYDVTSWTDVLPEFGGDTYGSDNF. Residues 142-154 form a beta stranded membrane-spanning segment; it reads MQQRGNGFATYRN. The Periplasmic portion of the chain corresponds to 155-163; it reads TDFFGLVDG. A beta stranded membrane pass occupies residues 164-171; it reads LNFAVQYQ. Over 172 to 204 the chain is Extracellular; that stretch reads GQNGSVSGENDPDFTGHGITNNGRKALRQNGDG. Residues 205–211 form a beta stranded membrane-spanning segment; that stretch reads VGGSITY. Residues 212-215 are Periplasmic-facing; it reads DYEG. A beta stranded membrane pass occupies residues 216–223; that stretch reads FGVGAAVS. Topologically, residues 224–245 are extracellular; sequence SSKRTDAQNTAAYIGNGDRAET. Residues 246 to 252 traverse the membrane as a beta stranded segment; the sequence is YTGGLKY. Topologically, residues 253-256 are periplasmic; it reads DANN. Residues 257–264 form a beta stranded membrane-spanning segment; that stretch reads IYLAAQYT. Topologically, residues 265 to 273 are extracellular; that stretch reads QTYNATRVG. The chain crosses the membrane as a beta stranded span at residues 274 to 290; sequence SLGWANKAQNFEAVAQY. Over 291 to 295 the chain is Periplasmic; that stretch reads QFDFG. Residues 296 to 303 form a beta stranded membrane-spanning segment; sequence LRPSVAYL. Topologically, residues 304–326 are extracellular; the sequence is QSKGKNLGTIGTRNYDDEDILKY. The chain crosses the membrane as a beta stranded span at residues 327–334; that stretch reads VDVGATYY. The Periplasmic portion of the chain corresponds to 335–338; the sequence is FNKN. Residues 339–346 traverse the membrane as a beta stranded segment; it reads MSTYVDYK. Residues 347-366 are Extracellular-facing; it reads INLLDDNQFTRDAGINTDNI. Residues 367 to 374 form a beta stranded membrane-spanning segment; it reads VALGLVYQ. Position 375 (Phe-375) is a topological domain, periplasmic.

This sequence belongs to the Gram-negative porin family. In terms of assembly, homotrimer. Forms mixed heterotrimers with OmpF; other mixed heterotrimers are also probable.

It is found in the cell outer membrane. Forms pores that allow passive diffusion of small molecules across the outer membrane. Its function is as follows. (Microbial infection) Supports colicin E5 entry in the absence of its major receptor OmpF. Functionally, (Microbial infection) A mixed OmpC-OmpF heterotrimer is the outer membrane receptor for toxin CdiA-EC536. The polypeptide is Outer membrane porin C (ompC) (Escherichia coli O6:K15:H31 (strain 536 / UPEC)).